The primary structure comprises 317 residues: Transaldolase (317 aa).

Lys-132 functions as the Schiff-base intermediate with substrate in the catalytic mechanism.

The protein belongs to the transaldolase family. Type 1 subfamily. In terms of assembly, homodimer.

The protein resides in the cytoplasm. It carries out the reaction D-sedoheptulose 7-phosphate + D-glyceraldehyde 3-phosphate = D-erythrose 4-phosphate + beta-D-fructose 6-phosphate. Its pathway is carbohydrate degradation; pentose phosphate pathway; D-glyceraldehyde 3-phosphate and beta-D-fructose 6-phosphate from D-ribose 5-phosphate and D-xylulose 5-phosphate (non-oxidative stage): step 2/3. Functionally, transaldolase is important for the balance of metabolites in the pentose-phosphate pathway. In Histophilus somni (strain 2336) (Haemophilus somnus), this protein is Transaldolase.